The following is a 534-amino-acid chain: Solute carrier family 22 member 15 (534 aa).

The helical transmembrane segment at 22 to 42 (FLLAVLLQLYSATEAIIITIL) threads the bilayer. 3 N-linked (GlcNAc...) asparagine glycosylation sites follow: Asn52, Asn58, and Asn83. Transmembrane regions (helical) follow at residues 97–117 (AAYEVSVSSSVYFGGVLIGVI), 136–156 (LALEVVFAVMNALTPIFPLFL), 161–181 (LVGVMNGGMSLVAFVLLNECI), 191–211 (SLGSLCFAVGIAQFALIGYFI), 216–236 (LLALLVNVQGAAVLALSLCIP), 297–317 (TLIMMWVWFVCSLVYYGLTLS), 327–347 (LNLALSGLAELPAYPLCMYLI), 356–376 (GSLAGFLCVGGGACLLIMLVP), 391–411 (TLSLLGKLNISAAFNIVYIYS), 424–444 (MGVCSMFSRIGGIIAPFIPAL), and 450–470 (ALPFIVFGAAGVSAGLLSLLL). An N-linked (GlcNAc...) asparagine glycan is attached at Asn513.

The protein belongs to the major facilitator (TC 2.A.1) superfamily. Organic cation transporter (TC 2.A.1.19) family.

Its subcellular location is the membrane. Probably transports organic cations. This chain is Solute carrier family 22 member 15 (slc22a15), found in Xenopus tropicalis (Western clawed frog).